The sequence spans 451 residues: uncharacterized protein (451 aa).

A TRAM domain is found at 1 to 59; sequence MLKKNDIVEVEISDLSHDGAGIAKVDGLVFFVDNALPTEKIRMRVLKVKKNIAFGKVES. 4 residues coordinate S-adenosyl-L-methionine: Gln283, Tyr312, Glu333, and Asp381. Residue Cys408 is the Nucleophile of the active site.

Belongs to the class I-like SAM-binding methyltransferase superfamily. RNA M5U methyltransferase family.

This is an uncharacterized protein from Streptococcus mutans serotype c (strain ATCC 700610 / UA159).